A 116-amino-acid polypeptide reads, in one-letter code: Large ribosomal subunit protein bL20 (116 aa).

Belongs to the bacterial ribosomal protein bL20 family.

In terms of biological role, binds directly to 23S ribosomal RNA and is necessary for the in vitro assembly process of the 50S ribosomal subunit. It is not involved in the protein synthesizing functions of that subunit. The protein is Large ribosomal subunit protein bL20 of Helicobacter acinonychis (strain Sheeba).